A 445-amino-acid chain; its full sequence is Phosphoglucosamine mutase (445 aa).

Ser99 functions as the Phosphoserine intermediate in the catalytic mechanism. Mg(2+) contacts are provided by Ser99, Asp242, Asp244, and Asp246. Ser99 carries the phosphoserine modification.

The protein belongs to the phosphohexose mutase family. Requires Mg(2+) as cofactor. In terms of processing, activated by phosphorylation.

It carries out the reaction alpha-D-glucosamine 1-phosphate = D-glucosamine 6-phosphate. In terms of biological role, catalyzes the conversion of glucosamine-6-phosphate to glucosamine-1-phosphate. The protein is Phosphoglucosamine mutase of Helicobacter pylori (strain G27).